The primary structure comprises 310 residues: Ornithine carbamoyltransferase (310 aa).

Carbamoyl phosphate-binding positions include 56 to 59 (STRT), Gln-83, Arg-107, and 134 to 137 (HPCQ). Residues Asn-165, Asp-229, and 233–234 (SM) each bind L-ornithine. Carbamoyl phosphate is bound by residues 269–270 (CL) and Arg-297.

It belongs to the aspartate/ornithine carbamoyltransferase superfamily. OTCase family.

The protein localises to the cytoplasm. It carries out the reaction carbamoyl phosphate + L-ornithine = L-citrulline + phosphate + H(+). The protein operates within amino-acid biosynthesis; L-arginine biosynthesis; L-arginine from L-ornithine and carbamoyl phosphate: step 1/3. Reversibly catalyzes the transfer of the carbamoyl group from carbamoyl phosphate (CP) to the N(epsilon) atom of ornithine (ORN) to produce L-citrulline. The chain is Ornithine carbamoyltransferase from Symbiobacterium thermophilum (strain DSM 24528 / JCM 14929 / IAM 14863 / T).